A 193-amino-acid polypeptide reads, in one-letter code: Peptidyl-tRNA hydrolase (193 aa).

Tyr16 provides a ligand contact to tRNA. His21 (proton acceptor) is an active-site residue. Residues Phe67, Asn69, and Asn115 each coordinate tRNA.

It belongs to the PTH family. Monomer.

It localises to the cytoplasm. It catalyses the reaction an N-acyl-L-alpha-aminoacyl-tRNA + H2O = an N-acyl-L-amino acid + a tRNA + H(+). Functionally, hydrolyzes ribosome-free peptidyl-tRNAs (with 1 or more amino acids incorporated), which drop off the ribosome during protein synthesis, or as a result of ribosome stalling. Catalyzes the release of premature peptidyl moieties from peptidyl-tRNA molecules trapped in stalled 50S ribosomal subunits, and thus maintains levels of free tRNAs and 50S ribosomes. The sequence is that of Peptidyl-tRNA hydrolase from Psychrobacter arcticus (strain DSM 17307 / VKM B-2377 / 273-4).